Reading from the N-terminus, the 348-residue chain is Protein lifeguard 1 (348 aa).

Residues 1–118 (MSHEKSFLVS…GNYQEEGPPS (118 aa)) form a disordered region. The span at 14 to 41 (YPPPNPGYPVGPQAPMPPYVQPPYPGAP) shows a compositional bias: pro residues. Residues 42–57 (YPQAAFQPSPYGQPGY) are compositionally biased toward low complexity. Over residues 82-101 (GPYPQSPFPPNPYGQPPPFQ) the composition is skewed to pro residues. Helical transmembrane passes span 142–162 (VFLVLTLQLSVTLSTVAIFTF), 174–194 (VWTYYVSYAIFFISLIVLSCC), 205–225 (LVALSILTISLSYMVGMIASF), 230–250 (AVIMAVGITTAVCFTVVIFSM), 260–280 (MGVLLVSVVVLFIFAILCIFI), 284–304 (ILEIVYASLGALLFTCFLAVD), and 323–343 (FAALNLYTDIINIFLYILTII).

It belongs to the BI1 family. LFG subfamily.

The protein localises to the membrane. Functionally, potential apoptotic regulator. This is Protein lifeguard 1 (Grina) from Rattus norvegicus (Rat).